The sequence spans 78 residues: Putative membrane protein insertion efficiency factor (78 aa).

This sequence belongs to the UPF0161 family.

The protein resides in the cell membrane. Could be involved in insertion of integral membrane proteins into the membrane. In Limosilactobacillus reuteri (strain DSM 20016) (Lactobacillus reuteri), this protein is Putative membrane protein insertion efficiency factor.